A 300-amino-acid polypeptide reads, in one-letter code: Cholesterol 25-hydroxylase-like protein (300 aa).

A glycan (N-linked (GlcNAc...) asparagine) is linked at Asn9. 3 helical membrane passes run 43 to 63 (LFPP…FTFI), 95 to 115 (LQGW…LIWV), and 130 to 152 (MVSQ…HYFN). One can recognise a Fatty acid hydroxylase domain in the interval 135–266 (AIFFLAFDFT…WFNYLDRLMG (132 aa)). A Histidine box-1 motif is present at residues 148–152 (FHYFN). Residues 163–167 (HSVHH) carry the Histidine box-2 motif. The helical transmembrane segment at 180-200 (LHPFELFFVATFITTVPWIFP) threads the bilayer. Positions 242 to 248 (AHDMHHL) match the Histidine box-3 motif.

Belongs to the sterol desaturase family. Requires Fe cation as cofactor.

The protein localises to the membrane. Functionally, probable sterol desaturase. This Caenorhabditis briggsae protein is Cholesterol 25-hydroxylase-like protein.